Here is a 77-residue protein sequence, read N- to C-terminus: Cell division topological specificity factor (77 aa).

Belongs to the MinE family.

Prevents the cell division inhibition by proteins MinC and MinD at internal division sites while permitting inhibition at polar sites. This ensures cell division at the proper site by restricting the formation of a division septum at the midpoint of the long axis of the cell. This Helicobacter acinonychis (strain Sheeba) protein is Cell division topological specificity factor.